Here is a 209-residue protein sequence, read N- to C-terminus: Uracil phosphoribosyltransferase (209 aa).

5-phospho-alpha-D-ribose 1-diphosphate-binding positions include Arg79, Arg104, and 131–139; that span reads DPMLATGGS. Uracil is bound by residues Ile194 and 199–201; that span reads GDA. A 5-phospho-alpha-D-ribose 1-diphosphate-binding site is contributed by Asp200.

Belongs to the UPRTase family. Mg(2+) serves as cofactor.

It carries out the reaction UMP + diphosphate = 5-phospho-alpha-D-ribose 1-diphosphate + uracil. The protein operates within pyrimidine metabolism; UMP biosynthesis via salvage pathway; UMP from uracil: step 1/1. Its activity is regulated as follows. Allosterically activated by GTP. Catalyzes the conversion of uracil and 5-phospho-alpha-D-ribose 1-diphosphate (PRPP) to UMP and diphosphate. This Streptococcus agalactiae serotype III (strain NEM316) protein is Uracil phosphoribosyltransferase.